We begin with the raw amino-acid sequence, 534 residues long: Serine/threonine-protein kinase ppk15 (534 aa).

The segment at 1–40 is disordered; it reads MDSDSPILPLSNNPPAARTHDHSQRNNHARHVSSSGTTLF. A phosphoserine mark is found at Ser-33, Ser-56, and Ser-60. Residues 85 to 104 are disordered; it reads FSSEQNPRRPLTKPSEGVHN. The 329-residue stretch at 130 to 458 folds into the Protein kinase domain; sequence YLILDTLGHG…PDQAKNHPFI (329 aa). ATP is bound by residues 136–144 and Lys-159; that span reads LGHGTFGQV. Asp-257 (proton acceptor) is an active-site residue. Tyr-291 bears the Phosphotyrosine mark.

Belongs to the protein kinase superfamily. Ser/Thr protein kinase family.

It is found in the cytoplasm. The protein resides in the cytoskeleton. It localises to the microtubule organizing center. The protein localises to the spindle pole body. The catalysed reaction is L-seryl-[protein] + ATP = O-phospho-L-seryl-[protein] + ADP + H(+). The enzyme catalyses L-threonyl-[protein] + ATP = O-phospho-L-threonyl-[protein] + ADP + H(+). This chain is Serine/threonine-protein kinase ppk15 (ppk15), found in Schizosaccharomyces pombe (strain 972 / ATCC 24843) (Fission yeast).